Consider the following 513-residue polypeptide: Light-independent protochlorophyllide reductase subunit B (513 aa).

Asp36 provides a ligand contact to [4Fe-4S] cluster. The active-site Proton donor is Asp299. Residue 434–435 (GM) participates in substrate binding.

Belongs to the ChlB/BchB/BchZ family. Protochlorophyllide reductase is composed of three subunits; ChlL, ChlN and ChlB. Forms a heterotetramer of two ChlB and two ChlN subunits. [4Fe-4S] cluster is required as a cofactor.

It is found in the plastid. Its subcellular location is the chloroplast. The enzyme catalyses chlorophyllide a + oxidized 2[4Fe-4S]-[ferredoxin] + 2 ADP + 2 phosphate = protochlorophyllide a + reduced 2[4Fe-4S]-[ferredoxin] + 2 ATP + 2 H2O. Its pathway is porphyrin-containing compound metabolism; chlorophyll biosynthesis (light-independent). In terms of biological role, component of the dark-operative protochlorophyllide reductase (DPOR) that uses Mg-ATP and reduced ferredoxin to reduce ring D of protochlorophyllide (Pchlide) to form chlorophyllide a (Chlide). This reaction is light-independent. The NB-protein (ChlN-ChlB) is the catalytic component of the complex. The protein is Light-independent protochlorophyllide reductase subunit B of Anthoceros angustus (Hornwort).